Here is a 357-residue protein sequence, read N- to C-terminus: BLOC-1-related complex subunit 6 (357 aa).

The segment at 20–196 (HQALVFGGGP…SGAGGGRRAT (177 aa)) is disordered. A compositionally biased stretch (low complexity) spans 90–99 (GAGSRRGAPG). Residues 138–149 (EQQEEEDNDEEA) are compositionally biased toward acidic residues. Positions 150 to 162 (AAGSRAGRSFSSR) are enriched in low complexity. Ser168 is subject to Phosphoserine. At Thr196 the chain carries Phosphothreonine. At Ser199 the chain carries Phosphoserine. Residues 227–256 (LSGAPPPPPSAPARPCPAPAPTPTPAIPPI) are disordered. Over residues 230-256 (APPPPPSAPARPCPAPAPTPTPAIPPI) the composition is skewed to pro residues.

The protein belongs to the BORCS6 family. Component of the BLOC-one-related complex (BORC) which is composed of BLOC1S1, BLOC1S2, BORCS5, BORCS6, BORCS7, BORCS8, KXD1 and SNAPIN.

It localises to the lysosome membrane. In terms of biological role, as part of the BORC complex may play a role in lysosomes movement and localization at the cell periphery. Associated with the cytosolic face of lysosomes, the BORC complex may recruit ARL8B and couple lysosomes to microtubule plus-end-directed kinesin motor. The protein is BLOC-1-related complex subunit 6 of Homo sapiens (Human).